The primary structure comprises 321 residues: Phosphate acyltransferase (321 aa).

It belongs to the PlsX family. In terms of assembly, homodimer. Probably interacts with PlsY.

The protein localises to the cytoplasm. It carries out the reaction a fatty acyl-[ACP] + phosphate = an acyl phosphate + holo-[ACP]. Its pathway is lipid metabolism; phospholipid metabolism. Its function is as follows. Catalyzes the reversible formation of acyl-phosphate (acyl-PO(4)) from acyl-[acyl-carrier-protein] (acyl-ACP). This enzyme utilizes acyl-ACP as fatty acyl donor, but not acyl-CoA. This Chlamydia trachomatis serovar A (strain ATCC VR-571B / DSM 19440 / HAR-13) protein is Phosphate acyltransferase.